The primary structure comprises 339 residues: DNA-directed RNA polymerase subunit alpha (339 aa).

The alpha N-terminal domain (alpha-NTD) stretch occupies residues 1–233 (MVREEVAGST…DLFLPFLHAE (233 aa)). Residues 264 to 339 (KKGIPLNCIF…IDLLKNKLSF (76 aa)) are alpha C-terminal domain (alpha-CTD).

It belongs to the RNA polymerase alpha chain family. In terms of assembly, in plastids the minimal PEP RNA polymerase catalytic core is composed of four subunits: alpha, beta, beta', and beta''. When a (nuclear-encoded) sigma factor is associated with the core the holoenzyme is formed, which can initiate transcription.

The protein resides in the plastid. It localises to the chloroplast. It carries out the reaction RNA(n) + a ribonucleoside 5'-triphosphate = RNA(n+1) + diphosphate. In terms of biological role, DNA-dependent RNA polymerase catalyzes the transcription of DNA into RNA using the four ribonucleoside triphosphates as substrates. The sequence is that of DNA-directed RNA polymerase subunit alpha from Australopyrum velutinum (Mountain wheat-grass).